A 132-amino-acid polypeptide reads, in one-letter code: Phosphoribosyl-AMP cyclohydrolase (132 aa).

Aspartate 82 is a binding site for Mg(2+). Residue cysteine 83 coordinates Zn(2+). 2 residues coordinate Mg(2+): aspartate 84 and aspartate 86. 2 residues coordinate Zn(2+): cysteine 100 and cysteine 107.

It belongs to the PRA-CH family. As to quaternary structure, homodimer. Requires Mg(2+) as cofactor. The cofactor is Zn(2+).

It localises to the cytoplasm. It catalyses the reaction 1-(5-phospho-beta-D-ribosyl)-5'-AMP + H2O = 1-(5-phospho-beta-D-ribosyl)-5-[(5-phospho-beta-D-ribosylamino)methylideneamino]imidazole-4-carboxamide. It functions in the pathway amino-acid biosynthesis; L-histidine biosynthesis; L-histidine from 5-phospho-alpha-D-ribose 1-diphosphate: step 3/9. In terms of biological role, catalyzes the hydrolysis of the adenine ring of phosphoribosyl-AMP. This chain is Phosphoribosyl-AMP cyclohydrolase, found in Dechloromonas aromatica (strain RCB).